We begin with the raw amino-acid sequence, 337 residues long: Putative NAC domain-containing protein 94 (337 aa).

Residues 20–191 (VLPGFRFHPT…AWAICRIFKK (172 aa)) form the NAC domain.

It localises to the nucleus. The chain is Putative NAC domain-containing protein 94 (ANAC094) from Arabidopsis thaliana (Mouse-ear cress).